Reading from the N-terminus, the 287-residue chain is Gliotoxin thiomethyltransferase GtmA (287 aa).

Residues T27 and A54 each coordinate S-adenosyl-L-methionine. An intrachain disulfide couples C55 to C80. D82, M87, N109, A110, A126, and R248 together coordinate S-adenosyl-L-methionine.

The protein belongs to the class I-like SAM-binding methyltransferase superfamily.

The protein localises to the cytoplasm. It catalyses the reaction a thiol + S-adenosyl-L-methionine = a methyl thioether + S-adenosyl-L-homocysteine + H(+). Functionally, S-methyltransferase that catalyzes the irreversible conversion of the secondary metabolite gliotoxin to bis(methylthio)gliotoxin (BmGT). Gliotoxin, a member of the epipolythiodioxopiperazine (ETP) class of toxins, is characterized by a disulfide bridged cyclic dipeptide. Its thiol groups are essential for bioactivity, as they conjugate to sulfur-containing proteins, disturb the intracellular redox equilibrium, and generate reactive oxygen species by cycling between reduced and oxidized states. The enzyme prevents self-intoxication of the fungus by irreversible conversion of the toxic gliotoxin to a biologically inactive bis-thiomethylated derivative. Appears to negatively regulate gliotoxin biosynthesis. In Aspergillus fumigatus (strain ATCC MYA-4609 / CBS 101355 / FGSC A1100 / Af293) (Neosartorya fumigata), this protein is Gliotoxin thiomethyltransferase GtmA.